The primary structure comprises 331 residues: Sideroflexin-5 (331 aa).

Helical transmembrane passes span 104–126 (PFGW…LLFW), 153–175 (YIGA…TYFI), 243–265 (TTMV…MPYL), and 278–300 (HIFV…ALAL).

Belongs to the sideroflexin family.

Its subcellular location is the mitochondrion inner membrane. It catalyses the reaction citrate(in) = citrate(out). Mitochondrial amino-acid transporter. The chain is Sideroflexin-5 from Caenorhabditis elegans.